Consider the following 599-residue polypeptide: UvrABC system protein C (599 aa).

Residues proline 15–valine 93 enclose the GIY-YIG domain. Residues glutamine 202 to isoleucine 237 form the UVR domain.

It belongs to the UvrC family. In terms of assembly, interacts with UvrB in an incision complex.

It is found in the cytoplasm. In terms of biological role, the UvrABC repair system catalyzes the recognition and processing of DNA lesions. UvrC both incises the 5' and 3' sides of the lesion. The N-terminal half is responsible for the 3' incision and the C-terminal half is responsible for the 5' incision. In Nitrosococcus oceani (strain ATCC 19707 / BCRC 17464 / JCM 30415 / NCIMB 11848 / C-107), this protein is UvrABC system protein C.